The following is a 160-amino-acid chain: MSLATLDTTEHPNLPTVSTTLFKAKAARKLSFEKIGEHIGRNEVAAAAIFYGQAKPSREDIEKLADLLHIPQQPLEEQLNGFPDRGRSVEMPPKEPLIYRLYEIVQNYGYAYKAVLNEKFGDGIMSAISFSTKVEKETDEDGNNWAVITLRGKWLPFSRF.

Active-site residues include Arg-100, Glu-103, and Ser-126.

It belongs to the cyanase family.

The enzyme catalyses cyanate + hydrogencarbonate + 3 H(+) = NH4(+) + 2 CO2. Its function is as follows. Catalyzes the reaction of cyanate with bicarbonate to produce ammonia and carbon dioxide. This chain is Cyanate hydratase, found in Penicillium rubens (strain ATCC 28089 / DSM 1075 / NRRL 1951 / Wisconsin 54-1255) (Penicillium chrysogenum).